Reading from the N-terminus, the 357-residue chain is Glutamate 5-kinase (357 aa).

Lys7 lines the ATP pocket. Residues Ser43, Asp130, and Asn142 each contribute to the substrate site. ATP is bound at residue 162–163; that stretch reads TD. Residues 270–347 form the PUA domain; it reads QGELTLDAGA…PAAGPSPVVV (78 aa).

Belongs to the glutamate 5-kinase family.

It localises to the cytoplasm. It catalyses the reaction L-glutamate + ATP = L-glutamyl 5-phosphate + ADP. Its pathway is amino-acid biosynthesis; L-proline biosynthesis; L-glutamate 5-semialdehyde from L-glutamate: step 1/2. Catalyzes the transfer of a phosphate group to glutamate to form L-glutamate 5-phosphate. This is Glutamate 5-kinase from Parasynechococcus marenigrum (strain WH8102).